The following is a 353-amino-acid chain: UPF0283 membrane protein YcjF (353 aa).

3 helical membrane-spanning segments follow: residues 70 to 90, 100 to 120, and 213 to 233; these read MVMG…IQWT, VALG…GSVV, and ESTL…FIAW.

It belongs to the UPF0283 family.

It localises to the cell inner membrane. In Shigella flexneri serotype 5b (strain 8401), this protein is UPF0283 membrane protein YcjF.